The sequence spans 441 residues: Ribulose bisphosphate carboxylase large chain (441 aa).

An N6,N6,N6-trimethyllysine modification is found at K5. Positions 114 and 164 each coordinate substrate. The active-site Proton acceptor is the K166. Residue K168 coordinates substrate. Mg(2+) contacts are provided by K192, D194, and E195. K192 carries the N6-carboxylysine modification. H285 serves as the catalytic Proton acceptor. Residues R286, H318, and S370 each coordinate substrate.

This sequence belongs to the RuBisCO large chain family. Type I subfamily. As to quaternary structure, heterohexadecamer of 8 large chains and 8 small chains; disulfide-linked. The disulfide link is formed within the large subunit homodimers. It depends on Mg(2+) as a cofactor. The disulfide bond which can form in the large chain dimeric partners within the hexadecamer appears to be associated with oxidative stress and protein turnover.

It localises to the plastid. It is found in the chloroplast. The catalysed reaction is 2 (2R)-3-phosphoglycerate + 2 H(+) = D-ribulose 1,5-bisphosphate + CO2 + H2O. The enzyme catalyses D-ribulose 1,5-bisphosphate + O2 = 2-phosphoglycolate + (2R)-3-phosphoglycerate + 2 H(+). In terms of biological role, ruBisCO catalyzes two reactions: the carboxylation of D-ribulose 1,5-bisphosphate, the primary event in carbon dioxide fixation, as well as the oxidative fragmentation of the pentose substrate in the photorespiration process. Both reactions occur simultaneously and in competition at the same active site. This is Ribulose bisphosphate carboxylase large chain from Pellaea rotundifolia (Button fern).